The primary structure comprises 190 residues: MKLLEDKIKSEGIVLPNNVLKVDGFLNHQVDAQLMFEIGKEFGRLFKKQNVTKILTVESSGIAPAVMTGLAMDVPVVFARKHKSLTLTDDLYTASVYSYTKQTSNQISISKRFIDEKDRVLIIDDFLANGQAVSGLLDIADAANIDVVGVGIVIEKTFQKGSQIIKDRDIQLESLARIKALTDDGQVEFE.

Xanthine-binding residues include Leu-20 and Asn-27. 5-phospho-alpha-D-ribose 1-diphosphate is bound at residue 128–132; that stretch reads ANGQA. A xanthine-binding site is contributed by Lys-156.

The protein belongs to the purine/pyrimidine phosphoribosyltransferase family. Xpt subfamily. As to quaternary structure, homodimer.

The protein localises to the cytoplasm. It carries out the reaction XMP + diphosphate = xanthine + 5-phospho-alpha-D-ribose 1-diphosphate. It participates in purine metabolism; XMP biosynthesis via salvage pathway; XMP from xanthine: step 1/1. Its function is as follows. Converts the preformed base xanthine, a product of nucleic acid breakdown, to xanthosine 5'-monophosphate (XMP), so it can be reused for RNA or DNA synthesis. The sequence is that of Xanthine phosphoribosyltransferase from Pediococcus pentosaceus (strain ATCC 25745 / CCUG 21536 / LMG 10740 / 183-1w).